Reading from the N-terminus, the 334-residue chain is Protein POLAR-like 1 (334 aa).

A compositionally biased stretch (basic and acidic residues) spans 53–63; sequence IRTSSEDDHHR. Positions 53–74 are disordered; that stretch reads IRTSSEDDHHRVGQFSDSPPPT. Residues 273 to 300 are a coiled coil; that stretch reads ETRQQEEIKELEIALDDAKQRLHLKETE.

The protein resides in the cytoplasm. Its subcellular location is the cell cortex. Functionally, acts as a stomatal lineage scaffold which regulates subcellular localization and transient polarization of kinases (e.g. ASK7/BIN2 and ASK3/SK12) involved in asymmetric cell division (ACD) in a BASL-dependent manner. This Arabidopsis thaliana (Mouse-ear cress) protein is Protein POLAR-like 1.